The primary structure comprises 754 residues: 5-methyltetrahydropteroyltriglutamate--homocysteine methyltransferase (754 aa).

5-methyltetrahydropteroyltri-L-glutamate is bound by residues 15–18 and Lys114; that span reads RELK. Residues 430-432 and Glu483 each bind L-homocysteine; that span reads IGS. L-methionine is bound by residues 430–432 and Glu483; that span reads IGS. Residues 514-515 and Trp560 contribute to the 5-methyltetrahydropteroyltri-L-glutamate site; that span reads RC. Asp598 lines the L-homocysteine pocket. Residue Asp598 participates in L-methionine binding. Glu604 provides a ligand contact to 5-methyltetrahydropteroyltri-L-glutamate. Zn(2+) is bound by residues His641, Cys643, and Glu665. His694 acts as the Proton donor in catalysis. Cys726 contributes to the Zn(2+) binding site.

It belongs to the vitamin-B12 independent methionine synthase family. Requires Zn(2+) as cofactor.

The catalysed reaction is 5-methyltetrahydropteroyltri-L-glutamate + L-homocysteine = tetrahydropteroyltri-L-glutamate + L-methionine. The protein operates within amino-acid biosynthesis; L-methionine biosynthesis via de novo pathway; L-methionine from L-homocysteine (MetE route): step 1/1. In terms of biological role, catalyzes the transfer of a methyl group from 5-methyltetrahydrofolate to homocysteine resulting in methionine formation. This chain is 5-methyltetrahydropteroyltriglutamate--homocysteine methyltransferase, found in Campylobacter jejuni subsp. jejuni serotype O:6 (strain 81116 / NCTC 11828).